We begin with the raw amino-acid sequence, 561 residues long: Arginine--tRNA ligase (561 aa).

The 'HIGH' region signature appears at 129 to 139 (ANPTGPLHIGH).

The protein belongs to the class-I aminoacyl-tRNA synthetase family. As to quaternary structure, monomer.

The protein localises to the cytoplasm. The catalysed reaction is tRNA(Arg) + L-arginine + ATP = L-arginyl-tRNA(Arg) + AMP + diphosphate. This is Arginine--tRNA ligase from Geotalea daltonii (strain DSM 22248 / JCM 15807 / FRC-32) (Geobacter daltonii).